A 315-amino-acid chain; its full sequence is 4-hydroxy-3-methylbut-2-enyl diphosphate reductase (315 aa).

Cys-12 contacts [4Fe-4S] cluster. (2E)-4-hydroxy-3-methylbut-2-enyl diphosphate-binding residues include His-41 and His-74. His-41 and His-74 together coordinate dimethylallyl diphosphate. Residues His-41 and His-74 each contribute to the isopentenyl diphosphate site. Position 96 (Cys-96) interacts with [4Fe-4S] cluster. His-124 contacts (2E)-4-hydroxy-3-methylbut-2-enyl diphosphate. His-124 provides a ligand contact to dimethylallyl diphosphate. Residue His-124 participates in isopentenyl diphosphate binding. Glu-126 functions as the Proton donor in the catalytic mechanism. A (2E)-4-hydroxy-3-methylbut-2-enyl diphosphate-binding site is contributed by Thr-168. Cys-198 serves as a coordination point for [4Fe-4S] cluster. Positions 226, 227, 228, and 270 each coordinate (2E)-4-hydroxy-3-methylbut-2-enyl diphosphate. Residues Ser-226, Ser-227, Asn-228, and Ser-270 each coordinate dimethylallyl diphosphate. Isopentenyl diphosphate contacts are provided by Ser-226, Ser-227, Asn-228, and Ser-270.

This sequence belongs to the IspH family. [4Fe-4S] cluster is required as a cofactor.

It carries out the reaction isopentenyl diphosphate + 2 oxidized [2Fe-2S]-[ferredoxin] + H2O = (2E)-4-hydroxy-3-methylbut-2-enyl diphosphate + 2 reduced [2Fe-2S]-[ferredoxin] + 2 H(+). It catalyses the reaction dimethylallyl diphosphate + 2 oxidized [2Fe-2S]-[ferredoxin] + H2O = (2E)-4-hydroxy-3-methylbut-2-enyl diphosphate + 2 reduced [2Fe-2S]-[ferredoxin] + 2 H(+). The protein operates within isoprenoid biosynthesis; dimethylallyl diphosphate biosynthesis; dimethylallyl diphosphate from (2E)-4-hydroxy-3-methylbutenyl diphosphate: step 1/1. It functions in the pathway isoprenoid biosynthesis; isopentenyl diphosphate biosynthesis via DXP pathway; isopentenyl diphosphate from 1-deoxy-D-xylulose 5-phosphate: step 6/6. Functionally, catalyzes the conversion of 1-hydroxy-2-methyl-2-(E)-butenyl 4-diphosphate (HMBPP) into a mixture of isopentenyl diphosphate (IPP) and dimethylallyl diphosphate (DMAPP). Acts in the terminal step of the DOXP/MEP pathway for isoprenoid precursor biosynthesis. This chain is 4-hydroxy-3-methylbut-2-enyl diphosphate reductase, found in Pseudomonas putida (strain W619).